The sequence spans 389 residues: NAD-dependent protein deacetylase sirtuin-2 (389 aa).

The segment at 1–34 is disordered; the sequence is MAEPDPSHPLETQAGKVQEAQDSDSDSEGGAAGG. Alanine 2 bears the N-acetylalanine mark. Phosphoserine is present on residues serine 23, serine 25, and serine 27. A Nuclear export signal motif is present at residues 41-51; it reads LRNLFSQTLSL. The residue at position 53 (serine 53) is a Phosphoserine. Residues 57-338 form the Deacetylase sirtuin-type domain; sequence RLLDELTLEG…LALAELLGWK (282 aa). Residues 85 to 89 and 95 to 97 contribute to the NAD(+) site; these read AGIST and DFR. Serine 100 is subject to Phosphoserine. 167–170 serves as a coordination point for NAD(+); the sequence is QNID. The Proton acceptor role is filled by histidine 187. Zn(2+)-binding residues include cysteine 195 and cysteine 200. Serine 207 is modified (phosphoserine). Positions 221 and 224 each coordinate Zn(2+). NAD(+)-binding positions include 262–263, 286–288, and cysteine 324; these read TS and NKE. Positions 351–389 are disordered; that stretch reads SIDAQSGAGVPNPSTSASPKKSPPPAKDEARTTEREKPQ. Residues 361-370 are compositionally biased toward low complexity; it reads PNPSTSASPK. Serine 368 carries the post-translational modification Phosphoserine; by CDK2 and CDK5. Serine 372 is subject to Phosphoserine. Residues 376-389 show a composition bias toward basic and acidic residues; the sequence is AKDEARTTEREKPQ.

It belongs to the sirtuin family. Class I subfamily. In terms of assembly, interacts with CDC20, FOXO3 and FZR1. Associates with microtubules in primary cortical mature neurons. Homotrimer. Isoform 1 and isoform 2 interact (via both phosphorylated, unphosphorylated, active or inactive forms) with HDAC6; the interaction is necessary for the complex to interact with alpha-tubulin, suggesting that these proteins belong to a large complex that deacetylates the cytoskeleton. Interacts with FOXO1; the interaction is disrupted upon serum-starvation or oxidative stress, leading to increased level of acetylated FOXO1 and induction of autophagy. Interacts with RELA; the interaction occurs in the cytoplasm and is increased in a TNF-alpha-dependent manner. Interacts with HOXA10; the interaction is direct. Interacts with YWHAB and YWHAG; the interactions occur in a AKT-dependent manner and increase SIRT2-dependent TP53 deacetylation. Interacts with MAPK1/ERK2 and MAPK3/ERK1; the interactions increase SIRT2 stability and deacetylation activity. Interacts (phosphorylated form) with KMT5A isoform 2; the interaction is direct, stimulates KMT5A-mediated methyltransferase activity on histone at 'Lys-20' (H4K20me1) and is increased in a H(2)O(2)-induced oxidative stress-dependent manner. Interacts with G6PD; the interaction is enhanced by H(2)O(2) treatment. Interacts with a G1/S-specific cyclin E-CDK2 complex. Interacts with AURKA, CDK5R1 (p35 form) and CDK5 and HIF1A. Isoform 1, isoform 2 and isoform 5 interact (via C-terminus region) with EP300. Interacts with the tRNA ligase SARS1; recruited to the VEGFA promoter via interaction with SARS1. Interacts with BEX4; negatively regulates alpha-tubulin deacetylation by SIRT2. It depends on Zn(2+) as a cofactor. Post-translationally, phosphorylated at phosphoserine and phosphothreonine. Phosphorylated at Ser-368 by a mitotic kinase CDK1/cyclin B at the G2/M transition; phosphorylation regulates the delay in cell-cycle progression. Phosphorylated at Ser-368 by a mitotic kinase G1/S-specific cyclin E/Cdk2 complex; phosphorylation inactivates SIRT2-mediated alpha-tubulin deacetylation and thereby negatively regulates cell adhesion, cell migration and neurite outgrowth during neuronal differentiation. Phosphorylated by cyclin A/Cdk2 and p35-Cdk5 complexes and to a lesser extent by the cyclin D3/Cdk4 and cyclin B/Cdk1, in vitro. Dephosphorylated at Ser-368 by CDC14A and CDC14B around early anaphase. Acetylated by EP300; acetylation leads both to the decreased of SIRT2-mediated alpha-tubulin deacetylase activity and SIRT2-mediated down-regulation of TP53 transcriptional activity. In terms of processing, ubiquitinated. In terms of tissue distribution, isoform 1 is expressed in heart, liver and skeletal muscle, weakly expressed in the cortex. Isoform 2 is strongly expressed in the cortex, weakly expressed in heart and liver. Weakly expressed in several malignancies including breast, liver, brain, kidney and prostate cancers compared to normal tissues. Weakly expressed in glioma cell lines compared to normal brain tissues (at protein level). Widely expressed. Highly expressed in heart, brain and skeletal muscle, while it is weakly expressed in placenta and lung. Down-regulated in many gliomas suggesting that it may act as a tumor suppressor gene in human gliomas possibly through the regulation of microtubule network.

The protein resides in the nucleus. It is found in the cytoplasm. It localises to the perinuclear region. Its subcellular location is the cytoskeleton. The protein localises to the microtubule organizing center. The protein resides in the centrosome. It is found in the centriole. It localises to the spindle. Its subcellular location is the midbody. The protein localises to the chromosome. The protein resides in the perikaryon. It is found in the cell projection. It localises to the growth cone. Its subcellular location is the myelin membrane. The catalysed reaction is N(6)-acetyl-L-lysyl-[protein] + NAD(+) + H2O = 2''-O-acetyl-ADP-D-ribose + nicotinamide + L-lysyl-[protein]. It carries out the reaction N(6)-tetradecanoyl-L-lysyl-[protein] + NAD(+) + H2O = 2''-O-tetradecanoyl-ADP-D-ribose + nicotinamide + L-lysyl-[protein]. It catalyses the reaction N(6)-hexadecanoyl-L-lysyl-[protein] + NAD(+) + H2O = 2''-O-hexadecanoyl-ADP-D-ribose + nicotinamide + L-lysyl-[protein]. Inhibited by Sirtinol, A3 and M15 small molecules. Inhibited by nicotinamide. Inhibited by a macrocyclic peptide inhibitor S2iL5. Inhibited by EP300-induced acetylation. Functionally, NAD-dependent protein deacetylase, which deacetylates internal lysines on histone and alpha-tubulin as well as many other proteins such as key transcription factors. Participates in the modulation of multiple and diverse biological processes such as cell cycle control, genomic integrity, microtubule dynamics, cell differentiation, metabolic networks, and autophagy. Plays a major role in the control of cell cycle progression and genomic stability. Functions in the antephase checkpoint preventing precocious mitotic entry in response to microtubule stress agents, and hence allowing proper inheritance of chromosomes. Positively regulates the anaphase promoting complex/cyclosome (APC/C) ubiquitin ligase complex activity by deacetylating CDC20 and FZR1, then allowing progression through mitosis. Associates both with chromatin at transcriptional start sites (TSSs) and enhancers of active genes. Plays a role in cell cycle and chromatin compaction through epigenetic modulation of the regulation of histone H4 'Lys-20' methylation (H4K20me1) during early mitosis. Specifically deacetylates histone H4 at 'Lys-16' (H4K16ac) between the G2/M transition and metaphase enabling H4K20me1 deposition by KMT5A leading to ulterior levels of H4K20me2 and H4K20me3 deposition throughout cell cycle, and mitotic S-phase progression. Deacetylates KMT5A modulating KMT5A chromatin localization during the mitotic stress response. Also deacetylates histone H3 at 'Lys-57' (H3K56ac) during the mitotic G2/M transition. Upon bacterium Listeria monocytogenes infection, deacetylates 'Lys-18' of histone H3 in a receptor tyrosine kinase MET- and PI3K/Akt-dependent manner, thereby inhibiting transcriptional activity and promoting late stages of listeria infection. During oocyte meiosis progression, may deacetylate histone H4 at 'Lys-16' (H4K16ac) and alpha-tubulin, regulating spindle assembly and chromosome alignment by influencing microtubule dynamics and kinetochore function. Deacetylates histone H4 at 'Lys-16' (H4K16ac) at the VEGFA promoter and thereby contributes to regulate expression of VEGFA, a key regulator of angiogenesis. Deacetylates alpha-tubulin at 'Lys-40' and hence controls neuronal motility, oligodendroglial cell arbor projection processes and proliferation of non-neuronal cells. Phosphorylation at Ser-368 by a G1/S-specific cyclin E-CDK2 complex inactivates SIRT2-mediated alpha-tubulin deacetylation, negatively regulating cell adhesion, cell migration and neurite outgrowth during neuronal differentiation. Deacetylates PARD3 and participates in the regulation of Schwann cell peripheral myelination formation during early postnatal development and during postinjury remyelination. Involved in several cellular metabolic pathways. Plays a role in the regulation of blood glucose homeostasis by deacetylating and stabilizing phosphoenolpyruvate carboxykinase PCK1 activity in response to low nutrient availability. Acts as a key regulator in the pentose phosphate pathway (PPP) by deacetylating and activating the glucose-6-phosphate G6PD enzyme, and therefore, stimulates the production of cytosolic NADPH to counteract oxidative damage. Maintains energy homeostasis in response to nutrient deprivation as well as energy expenditure by inhibiting adipogenesis and promoting lipolysis. Attenuates adipocyte differentiation by deacetylating and promoting FOXO1 interaction to PPARG and subsequent repression of PPARG-dependent transcriptional activity. Plays a role in the regulation of lysosome-mediated degradation of protein aggregates by autophagy in neuronal cells. Deacetylates FOXO1 in response to oxidative stress or serum deprivation, thereby negatively regulating FOXO1-mediated autophagy. Deacetylates a broad range of transcription factors and co-regulators regulating target gene expression. Deacetylates transcriptional factor FOXO3 stimulating the ubiquitin ligase SCF(SKP2)-mediated FOXO3 ubiquitination and degradation. Deacetylates HIF1A and therefore promotes HIF1A degradation and inhibition of HIF1A transcriptional activity in tumor cells in response to hypoxia. Deacetylates RELA in the cytoplasm inhibiting NF-kappaB-dependent transcription activation upon TNF-alpha stimulation. Inhibits transcriptional activation by deacetylating p53/TP53 and EP300. Also deacetylates EIF5A. Functions as a negative regulator on oxidative stress-tolerance in response to anoxia-reoxygenation conditions. Plays a role as tumor suppressor. In addition to protein deacetylase activity, also has activity toward long-chain fatty acyl groups and mediates protein-lysine demyristoylation and depalmitoylation of target proteins, such as ARF6 and KRAS, thereby regulating their association with membranes. In terms of biological role, deacetylates EP300, alpha-tubulin and histone H3 and H4. Its function is as follows. Lacks deacetylation activity, at least toward known SIRT2 targets. The sequence is that of NAD-dependent protein deacetylase sirtuin-2 (SIRT2) from Homo sapiens (Human).